The following is a 233-amino-acid chain: MHLLIPAAGRGSRMGADGNKLLLPLSGRPLLAWTLAAAAQAPSTRWIGIIGQPMDEEAIRLLAQKLGLRVPVHWIEGGETRQQSVYRGLLALPVEAQQVLIHDGARCLASPALFERCAAALAEFSAIVAAVPVKDTIKQVYPQSRQVEKTIPREQLWAAQTPQGGNVGRLKAAHAWAAAQAVAVTDDAALCELRGEPVQVVPGEETNLKITTPADLLVAEAILKTQLRQDPSP.

It belongs to the IspD/TarI cytidylyltransferase family. IspD subfamily.

It carries out the reaction 2-C-methyl-D-erythritol 4-phosphate + CTP + H(+) = 4-CDP-2-C-methyl-D-erythritol + diphosphate. It participates in isoprenoid biosynthesis; isopentenyl diphosphate biosynthesis via DXP pathway; isopentenyl diphosphate from 1-deoxy-D-xylulose 5-phosphate: step 2/6. Catalyzes the formation of 4-diphosphocytidyl-2-C-methyl-D-erythritol from CTP and 2-C-methyl-D-erythritol 4-phosphate (MEP). This is 2-C-methyl-D-erythritol 4-phosphate cytidylyltransferase from Gloeobacter violaceus (strain ATCC 29082 / PCC 7421).